The following is a 436-amino-acid chain: Enolase (436 aa).

Gln167 lines the (2R)-2-phosphoglycerate pocket. The active-site Proton donor is the Glu209. The Mg(2+) site is built by Asp246, Glu291, and Asp318. Lys343, Arg372, Ser373, and Lys394 together coordinate (2R)-2-phosphoglycerate. Lys343 (proton acceptor) is an active-site residue.

Belongs to the enolase family. As to quaternary structure, component of the RNA degradosome, a multiprotein complex involved in RNA processing and mRNA degradation. It depends on Mg(2+) as a cofactor.

It is found in the cytoplasm. Its subcellular location is the secreted. The protein localises to the cell surface. The catalysed reaction is (2R)-2-phosphoglycerate = phosphoenolpyruvate + H2O. It functions in the pathway carbohydrate degradation; glycolysis; pyruvate from D-glyceraldehyde 3-phosphate: step 4/5. Functionally, catalyzes the reversible conversion of 2-phosphoglycerate (2-PG) into phosphoenolpyruvate (PEP). It is essential for the degradation of carbohydrates via glycolysis. This Actinobacillus pleuropneumoniae serotype 3 (strain JL03) protein is Enolase.